A 486-amino-acid chain; its full sequence is MGSRLHTREIQNGPPLPYNDDIRAFSKEYAESLDAQDPLHRFRNEFVIPSKEDLKRTTLDPNQEPEHSPTPSLYLCGNSLGLQPQSTRKYIEYYLRAWATKGVTGHFVQHDDQLLPPFVDVDAAGARLMAPIVGAMESEVAVMGTLTTNLHILMASFYQPTQERYKIIIEGKAFPSDHYAVESQIKHHNFDPKDGMVLIEPEDHTRPVLDTEHIIRTIDEHASSTAVILLSAIQYYTGQYFDIKRITAHAQSKGILVGWDCAHAAGNVDLQLHDWNVDFAAWCTYKYLNSGPGGTAALFVHERHGRVNLEQVNSESEPFRPRLSGWWGGDKKTRFLMDNNFIPQPGAAGFQLSNPSVLDMNAVVASLELFKQASMAEIRKKSLHITGYLEHLLLNYPLDTPSEKKPFTIITPSNPAERGAQLSVRLQPGLLDHVLETLEDNAVVIDERKPDVIRVAPAPLYNTYTDVWEFCRIFHEACQKALKARG.

The segment at 53 to 72 (DLKRTTLDPNQEPEHSPTPS) is disordered. Residues Leu146, Thr147, 174 to 177 (FPSD), Ser231, Asp260, His263, and Tyr285 contribute to the pyridoxal 5'-phosphate site. Lys286 carries the N6-(pyridoxal phosphate)lysine modification. Positions 326 and 354 each coordinate pyridoxal 5'-phosphate.

It belongs to the kynureninase family. Homodimer. It depends on pyridoxal 5'-phosphate as a cofactor.

The protein localises to the cytoplasm. It carries out the reaction L-kynurenine + H2O = anthranilate + L-alanine + H(+). The enzyme catalyses 3-hydroxy-L-kynurenine + H2O = 3-hydroxyanthranilate + L-alanine + H(+). The protein operates within amino-acid degradation; L-kynurenine degradation; L-alanine and anthranilate from L-kynurenine: step 1/1. It functions in the pathway cofactor biosynthesis; NAD(+) biosynthesis; quinolinate from L-kynurenine: step 2/3. Catalyzes the cleavage of L-kynurenine (L-Kyn) and L-3-hydroxykynurenine (L-3OHKyn) into anthranilic acid (AA) and 3-hydroxyanthranilic acid (3-OHAA), respectively. This is Kynureninase 1 (bna5-1) from Aspergillus clavatus (strain ATCC 1007 / CBS 513.65 / DSM 816 / NCTC 3887 / NRRL 1 / QM 1276 / 107).